A 215-amino-acid polypeptide reads, in one-letter code: Cytochrome b6 (215 aa).

A helical membrane pass occupies residues Ile-32–Phe-52. Cys-35 contacts heme c. Positions 86 and 100 each coordinate heme b. 3 consecutive transmembrane segments (helical) span residues Ala-90 to Phe-110, Leu-116 to Tyr-136, and Leu-186 to Ile-206. The heme b site is built by His-187 and His-202.

The protein belongs to the cytochrome b family. PetB subfamily. As to quaternary structure, the 4 large subunits of the cytochrome b6-f complex are cytochrome b6, subunit IV (17 kDa polypeptide, PetD), cytochrome f and the Rieske protein, while the 4 small subunits are PetG, PetL, PetM and PetN. The complex functions as a dimer. It depends on heme b as a cofactor. Requires heme c as cofactor.

The protein resides in the plastid. It is found in the chloroplast thylakoid membrane. In terms of biological role, component of the cytochrome b6-f complex, which mediates electron transfer between photosystem II (PSII) and photosystem I (PSI), cyclic electron flow around PSI, and state transitions. The polypeptide is Cytochrome b6 (Phalaenopsis aphrodite subsp. formosana (Moth orchid)).